We begin with the raw amino-acid sequence, 209 residues long: PRA1 family protein E (209 aa).

The disordered stretch occupies residues 1-20 (MNQKPPPYGYGGAGGGGVGP). The span at 9 to 19 (GYGGAGGGGVG) shows a compositional bias: gly residues. Transmembrane regions (helical) follow at residues 90 to 110 (IVFLGLIYHPMSMIAFIVVFI), 132 to 152 (VDDKIVLVLLSLVTVLALVYT), and 155 to 175 (GENVLVSLIIGLLIVGAHGAF).

This sequence belongs to the PRA1 family. In terms of assembly, interacts with PRA1B1, PRA1B2, PRA1B3, PRA1B4, PRA1B5 and PRA1B6. Expressed in hypocotyls, roots, lateral roots, columella cells, leaves and shoot apex.

It is found in the endosome membrane. Its function is as follows. May be involved in both secretory and endocytic intracellular trafficking in the endosomal/prevacuolar compartments. This is PRA1 family protein E (PRA1E) from Arabidopsis thaliana (Mouse-ear cress).